The primary structure comprises 257 residues: Imidazole glycerol phosphate synthase subunit HisF (257 aa).

Active-site residues include D11 and D130.

This sequence belongs to the HisA/HisF family. In terms of assembly, heterodimer of HisH and HisF.

It is found in the cytoplasm. The catalysed reaction is 5-[(5-phospho-1-deoxy-D-ribulos-1-ylimino)methylamino]-1-(5-phospho-beta-D-ribosyl)imidazole-4-carboxamide + L-glutamine = D-erythro-1-(imidazol-4-yl)glycerol 3-phosphate + 5-amino-1-(5-phospho-beta-D-ribosyl)imidazole-4-carboxamide + L-glutamate + H(+). It functions in the pathway amino-acid biosynthesis; L-histidine biosynthesis; L-histidine from 5-phospho-alpha-D-ribose 1-diphosphate: step 5/9. IGPS catalyzes the conversion of PRFAR and glutamine to IGP, AICAR and glutamate. The HisF subunit catalyzes the cyclization activity that produces IGP and AICAR from PRFAR using the ammonia provided by the HisH subunit. This is Imidazole glycerol phosphate synthase subunit HisF from Shewanella sp. (strain MR-7).